The chain runs to 171 residues: Peptidyl-prolyl cis-trans isomerase 7 (171 aa).

Positions 7–170 constitute a PPIase cyclophilin-type domain; sequence FFDITIAGKP…SECLIADCGQ (164 aa).

The protein belongs to the cyclophilin-type PPIase family.

It catalyses the reaction [protein]-peptidylproline (omega=180) = [protein]-peptidylproline (omega=0). Its function is as follows. PPIases accelerate the folding of proteins. It catalyzes the cis-trans isomerization of proline imidic peptide bonds in oligopeptides. The polypeptide is Peptidyl-prolyl cis-trans isomerase 7 (cyn-7) (Caenorhabditis elegans).